Consider the following 321-residue polypeptide: MKKVLVTGGTGLVGKALEAVIKEQSPEDEQWFFAGSKDADLTNLAATQALFAREKPTHVIHLAAMVGGLFHNMNNNLDFLRNNLLINDNVLQTAHEQGCVKVVSCLSTCIFPDKTSYPIDETMVHNGPPHPSNYGYSYAKRLIDVQNHAYHDKYGRVYTSVIPCNIFGPHDNYNPEVSHVIPGMIYRMHQLVTEKTDVPENDKVFTVFGSGMPLRQFVYSRDLAELMIWVLRNYESVEPIILSADEVQEVTIFEVAQAVAKAFNFNGRLVCDTSKSDGQYKKTASNAKLRSFLPDYAFTDLETAINASVKWYIENYDQARK.

NADP(+) is bound at residue 8–14 (GGTGLVG). The active-site Proton donor/acceptor is Tyr-136. NADP(+)-binding positions include Lys-140, 163–166 (PCNI), and His-179. Substrate is bound by residues Arg-187, Arg-215, and Asp-277.

This sequence belongs to the NAD(P)-dependent epimerase/dehydratase family. Fucose synthase subfamily. In terms of assembly, homodimer.

The enzyme catalyses GDP-beta-L-fucose + NADP(+) = GDP-4-dehydro-alpha-D-rhamnose + NADPH + H(+). It participates in nucleotide-sugar biosynthesis; GDP-L-fucose biosynthesis via de novo pathway; GDP-L-fucose from GDP-alpha-D-mannose: step 2/2. Catalyzes the two-step NADP-dependent conversion of GDP-4-dehydro-6-deoxy-D-mannose to GDP-fucose, involving an epimerase and a reductase reaction. The chain is Probable GDP-L-fucose synthase (Gmer) from Drosophila melanogaster (Fruit fly).